The sequence spans 186 residues: MTSTVNQSLDDFMGRFAAFVKEHAEAGAIEYDEDWPSPCYATDVTPESGTSIPWKPVLREQTSEFKDLSEALELTLHPDVAQFYSRYWSDNIVAQHPSGKLQILQAWNEEDFERLQQNIVGHILMKRRLRQPETIFIALTDEDDFVLSVDNQTGAVMLEQVGLQPKEQISPDLATFLDEIEPTTTD.

Belongs to the Syd family.

It localises to the cell inner membrane. Its function is as follows. Interacts with the SecY protein in vivo. May bind preferentially to an uncomplexed state of SecY, thus functioning either as a chelating agent for excess SecY in the cell or as a regulatory factor that negatively controls the translocase function. The protein is Protein Syd of Pseudoalteromonas atlantica (strain T6c / ATCC BAA-1087).